The chain runs to 499 residues: MTPRYVLAIDQGTTSSRAILFDRAGDIVGSAQREFAQIFPQPGWVEHDPREILTSVYATLTELLSREQIDPRHIAALGITNQRETTVVWDRATGQPIHNAIVWQSRQSHAICERLKCDGHEARVRERTGLLIDAYFSATKVRWILDHVEGAQQRAERGELLFGTIDSWLVWNLSGGQAHVTDYSNAARTLLFNIHTLDWDDDLLALLDIPRAMLPQVRDSSTVYAHTRPQFFFDHPIPIAGIAGDQQAALFGQACFLPGMVKNTYGTGCFMLMHTGTQAVRSRNGLLTTIAWGLDGRVEYALEGSIFIAGSVVQWLRDGLRMIERASDSQALAAQVPDSGGAYLVPAFVGLGAPYWRSDVRGAMFGLTRGTRKAHFVRAALEAMAYQTRDVLDAMQSDAGIALTELRADGGAIGNDFLAGFQADILGVPLLRPRLTETTALGAAYLAGLAVGFWSSREQIAAQWGLDRRFEPQMEVARREKLYAGWQQAVAATLAFHVD.

An ADP-binding site is contributed by T13. Residues T13, T14, and S15 each contribute to the ATP site. Residue T13 coordinates sn-glycerol 3-phosphate. R17 is an ADP binding site. Sn-glycerol 3-phosphate is bound by residues R83, E84, Y135, and D245. Residues R83, E84, Y135, D245, and Q246 each coordinate glycerol. Positions 267 and 310 each coordinate ADP. The ATP site is built by T267, G310, Q314, and G411. ADP is bound by residues G411 and N415.

The protein belongs to the FGGY kinase family.

The catalysed reaction is glycerol + ATP = sn-glycerol 3-phosphate + ADP + H(+). It participates in polyol metabolism; glycerol degradation via glycerol kinase pathway; sn-glycerol 3-phosphate from glycerol: step 1/1. Its activity is regulated as follows. Inhibited by fructose 1,6-bisphosphate (FBP). Functionally, key enzyme in the regulation of glycerol uptake and metabolism. Catalyzes the phosphorylation of glycerol to yield sn-glycerol 3-phosphate. This is Glycerol kinase from Stenotrophomonas maltophilia (strain K279a).